An 862-amino-acid polypeptide reads, in one-letter code: MGAPALLWPPLLLPLLTVLFGHLPGTLAQAQVCSANQTVFTMNENTTVSGPLADIFVPEDQYVTLGQLSTPNAFKVEGNKLFLIVTPDYEENSLLEAVLECKRGDTLVTQFRVFVAVLDINDNAPEFPFTIKEYNVSEDTRVNTIVIPETELKATDADKDDILVYTLQEVTPNASKFFSLVGINSPALKLDQTLDYYKSPNMTFRLLARDTREENVIPSHTATATVVLNVLPADLRTPWFLPCSFTDDYFCIQAQYHTVIPTGHKLPSPLILSPGPIYAVDGDQAINQPIVYSIMMGNTDDTFIINKDDGNLTMAKSIPSPMTFTLVVRAEQADMARYSVTQAVVEARDVTGNPLQFSQSLYFGTVVLGSEAGTAVKDKTFPSEILRIQAQYLGFPDLNSAVTYQVTNSSEFIMNKDILLTTVPMETERTIRIEVEANNTVTKDIATTIVEIQVSEREPPSTESPTPPEAGGTTGPSSNTTLETPSTSGTSQGPATTSSGGSAGPFPPAGTTLSPLTSAPTVPGGSPTLGISTSPQTATPGGDATQTPKPGTSQPMVPTPGASTSSQPATPSGSSTQTPKPGTSQPMVPTPGASTSSQPATPSGSSTQTPRPGTSQPMVPTPGASTSSQPATPSGSTQTPKPGTSQPTTTGPISGVGELGDGQRFSTVDMAVLGGVLGALLLLALIFLIILIHKHYRHRFTCCSGKAKEPQPSGYDNLTFLPDNKAKWSPTSNRKPEPGPEPVQPPLRPPSPMSSSPTPPSSMPPSPQPKASGSPKTVQAGDSPSAVRSILTKERRPEGEGGYKAVWFGKDIGAEADVVVLNEPTADVDSASASGSEGSDDDDDPDQKKSLRLGAVADNTYV.

The signal sequence occupies residues 1-28 (MGAPALLWPPLLLPLLTVLFGHLPGTLA). The Extracellular portion of the chain corresponds to 29 to 671 (QAQVCSANQT…GQRFSTVDMA (643 aa)). N36, N45, N135, N173, N201, N311, N408, N438, and N479 each carry an N-linked (GlcNAc...) asparagine glycan. Cadherin domains are found at residues 40–127 (FTMN…APEF), 128–240 (PFTI…TPWF), 252–357 (IQAQ…PLQF), and 358–462 (SQSL…PPST). The segment at 452-658 (IQVSEREPPS…TTGPISGVGE (207 aa)) is disordered. Residues 461–500 (STESPTPPEAGGTTGPSSNTTLETPSTSGTSQGPATTSSG) show a composition bias toward low complexity. Positions 529–652 (LGISTSPQTA…GTSQPTTTGP (124 aa)) are enriched in polar residues. Repeat copies occupy residues 545–575 (TQTP…SGSS), 576–606 (TQTP…SGSS), and 607–636 (TQTP…PSGS). The segment at 545–648 (TQTPKPGTSQ…TPKPGTSQPT (104 aa)) is 4 X 31 AA approximate tandem repeats. One copy of the 4; truncated repeat lies at 637-648 (TQTPKPGTSQPT). The chain crosses the membrane as a helical span at residues 672 to 692 (VLGGVLGALLLLALIFLIILI). The Cytoplasmic segment spans residues 693-862 (HKHYRHRFTC…LGAVADNTYV (170 aa)). The tract at residues 693-862 (HKHYRHRFTC…LGAVADNTYV (170 aa)) is mediates interaction with USH1C and MYO7B and is required for proper localization to microvilli tips and function in microvilli organization. Disordered stretches follow at residues 706–803 (KAKE…EGGY) and 821–862 (LNEP…NTYV). Phosphoserine is present on residues S729, S751, and S755. Over residues 739–768 (GPEPVQPPLRPPSPMSSSPTPPSSMPPSPQ) the composition is skewed to pro residues. T758 is subject to Phosphothreonine. A phosphoserine mark is found at S766 and S783. Residues 791–801 (LTKERRPEGEG) show a composition bias toward basic and acidic residues. T825 bears the Phosphothreonine mark. A compositionally biased stretch (low complexity) spans 827 to 837 (DVDSASASGSE). Phosphoserine occurs at positions 832, 834, and 836.

Part of the IMAC/intermicrovillar adhesion complex/intermicrovillar tip-link complex composed of ANKS4B, MYO7B, USH1C, CDHR2 and CDHR5. Interacts (via cytoplasmic domain) with USH1C and MYO7B; required for proper localization of CDHR5 to microvilli tips and its function in brush border differentiation. Post-translationally, N- and O-glycosylated. In terms of tissue distribution, expressed predominantly in kidney. Also detected in lung and small intestine.

The protein resides in the apical cell membrane. It is found in the cell projection. Its subcellular location is the microvillus membrane. In terms of biological role, intermicrovillar adhesion molecule that forms, via its extracellular domain, calcium-dependent heterophilic complexes with CDHR2 on adjacent microvilli. Thereby, controls the packing of microvilli at the apical membrane of epithelial cells. Through its cytoplasmic domain, interacts with microvillus cytoplasmic proteins to form the intermicrovillar adhesion complex/IMAC. This complex plays a central role in microvilli and epithelial brush border differentiation. This is Cadherin-related family member 5 from Rattus norvegicus (Rat).